We begin with the raw amino-acid sequence, 685 residues long: Serine/threonine-protein kinase PLK2 (685 aa).

Positions 24 to 71 (KGCGADSKKKRPPQPPEESQPPQSQAQVPPAAAHHHHHHSHSGPEISR) are disordered. Residues 43-55 (QPPQSQAQVPPAA) are compositionally biased toward low complexity. One can recognise a Protein kinase domain in the interval 82–334 (YCRGKVLGKG…LDDIIRHDFF (253 aa)). ATP is bound by residues 88 to 96 (LGKGGFAKC) and K111. D205 (proton acceptor) is an active-site residue. T239 carries the post-translational modification Phosphothreonine. Positions 406–433 (SITQQPSKHRTDEELQPPTTTVARSGTP) are disordered. 2 POLO box domains span residues 503-581 (WVTK…YMEE) and 601-685 (YLLQ…QRCN).

This sequence belongs to the protein kinase superfamily. Ser/Thr protein kinase family. CDC5/Polo subfamily. Interacts with NSF; causing NSF dissociation from GRIA2. Interacts with CIB1. Post-translationally, catalytic activity is enhanced by phosphorylation of Thr-239.

It localises to the cytoplasm. The protein resides in the cytoskeleton. It is found in the microtubule organizing center. Its subcellular location is the centrosome. The protein localises to the centriole. It localises to the cell projection. The protein resides in the dendrite. The enzyme catalyses L-seryl-[protein] + ATP = O-phospho-L-seryl-[protein] + ADP + H(+). It carries out the reaction L-threonyl-[protein] + ATP = O-phospho-L-threonyl-[protein] + ADP + H(+). With respect to regulation, activated by phosphorylation of Thr-239. Once activated, activity is stimulated by binding target proteins. Tumor suppressor serine/threonine-protein kinase involved in synaptic plasticity, centriole duplication and G1/S phase transition. Polo-like kinases act by binding and phosphorylating proteins that are already phosphorylated on a specific motif recognized by the POLO box domains. Phosphorylates CPAP, NPM1, RAPGEF2, RASGRF1, SNCA, SIPA1L1 and SYNGAP1. Plays a key role in synaptic plasticity and memory by regulating the Ras and Rap protein signaling: required for overactivity-dependent spine remodeling by phosphorylating the Ras activator RASGRF1 and the Rap inhibitor SIPA1L1 leading to their degradation by the proteasome. Conversely, phosphorylates the Rap activator RAPGEF2 and the Ras inhibitor SYNGAP1, promoting their activity. Also regulates synaptic plasticity independently of kinase activity, via its interaction with NSF that disrupts the interaction between NSF and the GRIA2 subunit of AMPARs, leading to a rapid rundown of AMPAR-mediated current that occludes long term depression. Required for procentriole formation and centriole duplication by phosphorylating CPAP and NPM1, respectively. Its induction by p53/TP53 suggests that it may participate in the mitotic checkpoint following stress. This is Serine/threonine-protein kinase PLK2 (PLK2) from Pongo abelii (Sumatran orangutan).